The sequence spans 1026 residues: Lon protease homolog, mitochondrial (1026 aa).

The transit peptide at 1 to 29 (MLGTRVTRAVYTRAPLKLQLRALGLHRRY) directs the protein to the mitochondrion. Disordered stretches follow at residues 29 to 55 (YVHN…DKKL) and 185 to 206 (ASEE…DKVS). The region spanning 62-345 (MLALPISRRP…KSLLVLKKEL (284 aa)) is the Lon N-terminal domain. Positions 185–194 (ASEETKDEET) are enriched in acidic residues. Positions 195 to 206 (VDKTESATDKVS) are enriched in basic and acidic residues. 497-504 (GPPGVGKT) provides a ligand contact to ATP. The segment at 711–785 (TEPLVSTSEE…EEEEDTSMIV (75 aa)) is disordered. Residues 714–737 (LVSTSEEPQLSQTNQNISSSSAED) are compositionally biased toward polar residues. In terms of domain architecture, Lon proteolytic spans 815–1001 (TTPPGVIMGL…DDIYKRLFSG (187 aa)). Residues Ser907 and Lys950 contribute to the active site.

It belongs to the peptidase S16 family. Homohexamer or homoheptamer. Organized in a ring with a central cavity.

The protein localises to the mitochondrion matrix. The enzyme catalyses Hydrolysis of proteins in presence of ATP.. Its function is as follows. ATP-dependent serine protease that mediates the selective degradation of misfolded, unassembled or oxidatively damaged polypeptides as well as certain short-lived regulatory proteins in the mitochondrial matrix. May also have a chaperone function in the assembly of inner membrane protein complexes. Participates in the regulation of mitochondrial gene expression and in the maintenance of the integrity of the mitochondrial genome. Binds to mitochondrial DNA in a site-specific manner. This Candida glabrata (strain ATCC 2001 / BCRC 20586 / JCM 3761 / NBRC 0622 / NRRL Y-65 / CBS 138) (Yeast) protein is Lon protease homolog, mitochondrial.